Consider the following 377-residue polypeptide: MARTGALLLVALALAGCAQACIYKFGTSPDSKATVSGDHWDHGLNGENWEGKDGAGNAWVCKTGRKQSPINVPQYQVLDGKGSKIANGLQTQWSYPDLMSNGTSVQVINNGHTIQVQWTYNYAGHATIAIPAMHNQTNRIVDVLEMRPNDAADRVTAVPTQFHFHSTSEHLLAGKIYPLELHIVHQVTEKLEACKGGCFSVTGILFQLDNGPDNELLEPIFANMPSREGTFSNLPAGTTIKLGELLPSDRDYVTYEGSLTTPPCSEGLLWHVMTQPQRISFGQWNRYRLAVGLKECNSTETAADAGHHHHHRRLLHNHAHLEEVPAATSEPKHYFRRVMLAESANPDAYTCKAVAFGQNFRNPQYANGRTIKLARYH.

A signal peptide spans 1–20 (MARTGALLLVALALAGCAQA). Positions 38–318 (DHWDHGLNGE…HHHRRLLHNH (281 aa)) constitute an Alpha-carbonic anhydrase domain. Disulfide bonds link C61/C264, C194/C198, and C296/C351. N-linked (GlcNAc...) asparagine glycosylation occurs at N101. H112 acts as the Proton acceptor in catalysis. An N-linked (GlcNAc...) asparagine glycan is attached at N135. Residues H163, H165, and H182 each coordinate Zn(2+). Residues T260 and 260-261 (TT) contribute to the substrate site. N297 carries N-linked (GlcNAc...) asparagine glycosylation.

The protein belongs to the alpha-carbonic anhydrase family. In terms of assembly, tetramer of two large and two small subunits linked by two disulfide bonds. It depends on Zn(2+) as a cofactor.

It is found in the periplasm. It catalyses the reaction hydrogencarbonate + H(+) = CO2 + H2O. Reversible hydration of carbon dioxide. This chain is Carbonic anhydrase 1 (CAH1), found in Chlamydomonas reinhardtii (Chlamydomonas smithii).